The sequence spans 341 residues: 4-hydroxy-2-oxovalerate aldolase 3 (341 aa).

Residues 5–257 (ITLHDMTLRD…ETGVDVYRIA (253 aa)) enclose the Pyruvate carboxyltransferase domain. A substrate-binding site is contributed by 13–14 (RD). A Mn(2+)-binding site is contributed by Asp14. His17 functions as the Proton acceptor in the catalytic mechanism. Residues Ser167 and His196 each coordinate substrate. Mn(2+)-binding residues include His196 and His198. Residue Tyr287 participates in substrate binding.

Belongs to the 4-hydroxy-2-oxovalerate aldolase family.

It carries out the reaction (S)-4-hydroxy-2-oxopentanoate = acetaldehyde + pyruvate. The protein is 4-hydroxy-2-oxovalerate aldolase 3 (bpHI) of Cupriavidus necator (strain ATCC 17699 / DSM 428 / KCTC 22496 / NCIMB 10442 / H16 / Stanier 337) (Ralstonia eutropha).